A 129-amino-acid chain; its full sequence is Small ribosomal subunit protein uS11 (129 aa).

Belongs to the universal ribosomal protein uS11 family. Part of the 30S ribosomal subunit. Interacts with proteins S7 and S18. Binds to IF-3.

Its function is as follows. Located on the platform of the 30S subunit, it bridges several disparate RNA helices of the 16S rRNA. Forms part of the Shine-Dalgarno cleft in the 70S ribosome. The polypeptide is Small ribosomal subunit protein uS11 (Erythrobacter litoralis (strain HTCC2594)).